A 422-amino-acid chain; its full sequence is Roquefortine prenyltransferase roqD (422 aa).

A substrate-binding site is contributed by Glu-100. Residues Arg-113, Lys-200, and Tyr-202 each coordinate dimethylallyl diphosphate. Residue Tyr-204 participates in substrate binding. Dimethylallyl diphosphate-binding residues include Lys-268, Tyr-270, Tyr-353, Tyr-416, and Tyr-420.

This sequence belongs to the tryptophan dimethylallyltransferase family.

The protein operates within alkaloid biosynthesis. Roquefortine prenyltransferase; part of the gene cluster that mediates the biosynthesis of the mycotoxins roquefortine C and meleagrin. The first stage is catalyzed by the dipeptide synthase roqA which condenses histidine and tryptophan to produce histidyltryptophanyldiketopiperazine (HTD). HTD is then converted to roquefortine C through two possible pathways. In the first pathway, prenyltransferase roqD transforms HTD to the intermediate roquefortine D, which is in turn converted to roquefortine C by the cytochrome P450 monooxygenase roqR. In the second pathway, HTD is first converted to the intermediate dehydrohistidyltryptophanyldi-ketopiperazine (DHTD) by roqR which is then prenylated by roqD to form roquefortine C. Roquefortine C can be further transformed to meleagrin via three more reactions including oxydation to glandicolin A by roqM, which is further reduced to glandicoline B by roqO. Finally, glandicoline B is converted to meleagrin by the glandicoline B O-methyltransferase roqN. More studies identified further branching and additional metabolites produced by the roquefortine/meleagrin cluster, including roquefortine F, roquefortine L, roquefortine M, roquefortine N and neoxaline. The sequence is that of Roquefortine prenyltransferase roqD from Penicillium rubens (strain ATCC 28089 / DSM 1075 / NRRL 1951 / Wisconsin 54-1255) (Penicillium chrysogenum).